We begin with the raw amino-acid sequence, 252 residues long: Chitooligosaccharide deacetylase (252 aa).

Mg(2+) is bound by residues H61 and H125.

Belongs to the YdjC deacetylase family. ChbG subfamily. In terms of assembly, homodimer. Mg(2+) serves as cofactor.

It is found in the cytoplasm. It catalyses the reaction N,N'-diacetylchitobiose + H2O = N-acetyl-beta-D-glucosaminyl-(1-&gt;4)-D-glucosamine + acetate. The catalysed reaction is diacetylchitobiose-6'-phosphate + H2O = N'-monoacetylchitobiose-6'-phosphate + acetate. It participates in glycan degradation; chitin degradation. Its function is as follows. Involved in the degradation of chitin. ChbG is essential for growth on the acetylated chitooligosaccharides chitobiose and chitotriose but is dispensable for growth on cellobiose and chitosan dimer, the deacetylated form of chitobiose. Deacetylation of chitobiose-6-P and chitotriose-6-P is necessary for both the activation of the chb promoter by the regulatory protein ChbR and the hydrolysis of phosphorylated beta-glucosides by the phospho-beta-glucosidase ChbF. Catalyzes the removal of only one acetyl group from chitobiose-6-P to yield monoacetylchitobiose-6-P, the inducer of ChbR and the substrate of ChbF. In Escherichia fergusonii (strain ATCC 35469 / DSM 13698 / CCUG 18766 / IAM 14443 / JCM 21226 / LMG 7866 / NBRC 102419 / NCTC 12128 / CDC 0568-73), this protein is Chitooligosaccharide deacetylase.